The chain runs to 359 residues: 3-dehydroquinate synthase (359 aa).

NAD(+) contacts are provided by residues 71–76, 105–109, 129–130, Lys-142, Lys-151, and 169–172; these read DGEQFK, GVIGD, TT, and CLHT. Residues Glu-184, His-247, and His-264 each contribute to the Zn(2+) site.

It belongs to the sugar phosphate cyclases superfamily. Dehydroquinate synthase family. It depends on Co(2+) as a cofactor. The cofactor is Zn(2+). NAD(+) serves as cofactor.

Its subcellular location is the cytoplasm. It carries out the reaction 7-phospho-2-dehydro-3-deoxy-D-arabino-heptonate = 3-dehydroquinate + phosphate. It participates in metabolic intermediate biosynthesis; chorismate biosynthesis; chorismate from D-erythrose 4-phosphate and phosphoenolpyruvate: step 2/7. Its function is as follows. Catalyzes the conversion of 3-deoxy-D-arabino-heptulosonate 7-phosphate (DAHP) to dehydroquinate (DHQ). The protein is 3-dehydroquinate synthase of Shewanella sp. (strain W3-18-1).